We begin with the raw amino-acid sequence, 426 residues long: MSDAFVELLDEMIERLLNYKPGSRTLPNVIKLCQTLGLESFVDQVDSTKSRLSIASNIVVIDIDYENEMETILDVKLVLASNFDKFNYFNEKGENILLTSLSDVQDLKAFHHNLNFLVFLDSFSNIDIESGHTSLDLFKYYTDLPKMLQDYISDQHLPFTVKMNENSTFGVSIYDAQGQTKIMTVDLEKAPNSDRSFYEYVYDSKLKDWLNESSDASTQGINLVFKFEELVAFPETWLTTEIQMNETPKKFELPQQSHLKHTVKLQNELTSDLLLMDSFRISNEDIALLPDFLKWYNWHKIVLQEVLKLIIHDNVTSSISTSNSGSVQPKPRRKSSVLSNRRPSMTDSMMLRDSGIPEFTLKEILDQPVISDTEDDDQMDVDKEKQIPIVLNEEYIYIGKAQTCSYNDNDEQAWKAFIDYLKSKLI.

Positions 319-349 (ISTSNSGSVQPKPRRKSSVLSNRRPSMTDSM) are disordered. Polar residues predominate over residues 336–347 (SVLSNRRPSMTD).

It belongs to the Mediator complex subunit 1 family. In terms of assembly, component of the Mediator complex.

It localises to the nucleus. Component of the Mediator complex, a coactivator involved in the regulated transcription of nearly all RNA polymerase II-dependent genes. Mediator functions as a bridge to convey information from gene-specific regulatory proteins to the basal RNA polymerase II transcription machinery. Mediator is recruited to promoters by direct interactions with regulatory proteins and serves as a scaffold for the assembly of a functional preinitiation complex with RNA polymerase II and the general transcription factors. The protein is Mediator of RNA polymerase II transcription subunit 1 (MED1) of Kluyveromyces lactis (strain ATCC 8585 / CBS 2359 / DSM 70799 / NBRC 1267 / NRRL Y-1140 / WM37) (Yeast).